A 96-amino-acid chain; its full sequence is Aspartyl/glutamyl-tRNA(Asn/Gln) amidotransferase subunit C (96 aa).

It belongs to the GatC family. In terms of assembly, heterotrimer of A, B and C subunits.

The catalysed reaction is L-glutamyl-tRNA(Gln) + L-glutamine + ATP + H2O = L-glutaminyl-tRNA(Gln) + L-glutamate + ADP + phosphate + H(+). It carries out the reaction L-aspartyl-tRNA(Asn) + L-glutamine + ATP + H2O = L-asparaginyl-tRNA(Asn) + L-glutamate + ADP + phosphate + 2 H(+). In terms of biological role, allows the formation of correctly charged Asn-tRNA(Asn) or Gln-tRNA(Gln) through the transamidation of misacylated Asp-tRNA(Asn) or Glu-tRNA(Gln) in organisms which lack either or both of asparaginyl-tRNA or glutaminyl-tRNA synthetases. The reaction takes place in the presence of glutamine and ATP through an activated phospho-Asp-tRNA(Asn) or phospho-Glu-tRNA(Gln). The polypeptide is Aspartyl/glutamyl-tRNA(Asn/Gln) amidotransferase subunit C (Leptospira borgpetersenii serovar Hardjo-bovis (strain JB197)).